Reading from the N-terminus, the 76-residue chain is Heat shock factor-binding protein 1 (76 aa).

It belongs to the HSBP1 family. Homohexamer. Associates with heptad repeats of HSF1 trimers and probably also HSF1 monomers, and with HSP70. Association with HSF1 trimers and HSP70 coincides with attenuation of heat shock response and the conversion of HSF1 trimer to monomer.

The protein resides in the nucleus. In terms of biological role, negative regulator of the heat shock response. Negatively affects HSF1 DNA-binding activity. May have a role in the suppression of the activation of the stress response during the aging process. This chain is Heat shock factor-binding protein 1 (Hsbp1), found in Mus musculus (Mouse).